Reading from the N-terminus, the 257-residue chain is uncharacterized protein (257 aa).

Positions M1–A22 are cleaved as a signal peptide. A lipid anchor (N-palmitoyl cysteine) is attached at C23. C23 carries the S-diacylglycerol cysteine lipid modification.

Belongs to the staphylococcal tandem lipoprotein family.

The protein resides in the cell membrane. This is an uncharacterized protein from Staphylococcus aureus (strain Mu50 / ATCC 700699).